The primary structure comprises 416 residues: Phosphoglycerate kinase (416 aa).

(2R)-3-phosphoglycerate is bound by residues Val-23, Asp-24, Phe-25, Asn-26, Arg-39, Ser-62, His-63, Gly-65, Arg-66, Leu-121, Arg-122, His-169, and Arg-170. Gly-213 contacts ADP. Gly-213 contacts CDP. The AMP site is built by Ala-214 and Lys-215. Ala-214 contacts ATP. Residue Ala-214 coordinates Mg(2+). Position 218 (Asp-218) interacts with CDP. Asp-218 is a Mg(2+) binding site. Lys-219 provides a ligand contact to AMP. Position 219 (Lys-219) interacts with ATP. Gly-237 contacts ADP. CDP is bound at residue Gly-237. Residues Gly-238 and Gly-312 each contribute to the AMP site. 2 residues coordinate ATP: Gly-238 and Gly-312. CDP is bound by residues Gly-337 and Phe-342. Phe-342 is a binding site for ADP. Glu-343 contributes to the AMP binding site. ATP-binding residues include Glu-343, Asp-374, and Thr-375. Residue Asp-374 participates in Mg(2+) binding.

The protein belongs to the phosphoglycerate kinase family. In terms of assembly, monomer. It depends on Mg(2+) as a cofactor.

Its subcellular location is the cytoplasm. The protein resides in the mitochondrion. The catalysed reaction is (2R)-3-phosphoglycerate + ATP = (2R)-3-phospho-glyceroyl phosphate + ADP. It participates in carbohydrate degradation; glycolysis; pyruvate from D-glyceraldehyde 3-phosphate: step 2/5. Catalyzes one of the two ATP producing reactions in the glycolytic pathway via the reversible conversion of 1,3-diphosphoglycerate to 3-phosphoglycerate. Both L- and D- forms of purine and pyrimidine nucleotides can be used as substrates, but the activity is much lower on pyrimidines. Negatively regulates the biosynthesis of acetyl-CoA from pyruvate in the mitochondrion. The protein is Phosphoglycerate kinase (pgkA) of Agaricus bisporus (White button mushroom).